A 616-amino-acid chain; its full sequence is Dihydroxy-acid dehydratase (616 aa).

A Mg(2+)-binding site is contributed by Asp-81. Cys-122 contacts [2Fe-2S] cluster. 2 residues coordinate Mg(2+): Asp-123 and Lys-124. Position 124 is an N6-carboxylysine (Lys-124). Cys-195 serves as a coordination point for [2Fe-2S] cluster. Residue Glu-491 coordinates Mg(2+). Ser-517 (proton acceptor) is an active-site residue.

This sequence belongs to the IlvD/Edd family. In terms of assembly, homodimer. The cofactor is [2Fe-2S] cluster. It depends on Mg(2+) as a cofactor.

It carries out the reaction (2R)-2,3-dihydroxy-3-methylbutanoate = 3-methyl-2-oxobutanoate + H2O. The catalysed reaction is (2R,3R)-2,3-dihydroxy-3-methylpentanoate = (S)-3-methyl-2-oxopentanoate + H2O. Its pathway is amino-acid biosynthesis; L-isoleucine biosynthesis; L-isoleucine from 2-oxobutanoate: step 3/4. It functions in the pathway amino-acid biosynthesis; L-valine biosynthesis; L-valine from pyruvate: step 3/4. Its function is as follows. Functions in the biosynthesis of branched-chain amino acids. Catalyzes the dehydration of (2R,3R)-2,3-dihydroxy-3-methylpentanoate (2,3-dihydroxy-3-methylvalerate) into 2-oxo-3-methylpentanoate (2-oxo-3-methylvalerate) and of (2R)-2,3-dihydroxy-3-methylbutanoate (2,3-dihydroxyisovalerate) into 2-oxo-3-methylbutanoate (2-oxoisovalerate), the penultimate precursor to L-isoleucine and L-valine, respectively. This is Dihydroxy-acid dehydratase from Salmonella newport (strain SL254).